The chain runs to 273 residues: Putative tyrosine-protein phosphatase H16_A0669 (273 aa).

Positions 1-15 are cleaved as a signal peptide; that stretch reads MIKWLQRAGCLSAHA. Residue Cys169 is the Phosphocysteine intermediate of the active site.

This sequence belongs to the protein-tyrosine phosphatase family.

The catalysed reaction is O-phospho-L-tyrosyl-[protein] + H2O = L-tyrosyl-[protein] + phosphate. The polypeptide is Putative tyrosine-protein phosphatase H16_A0669 (Cupriavidus necator (strain ATCC 17699 / DSM 428 / KCTC 22496 / NCIMB 10442 / H16 / Stanier 337) (Ralstonia eutropha)).